Here is a 102-residue protein sequence, read N- to C-terminus: Protein translation factor SUI1 homolog (102 aa).

Belongs to the SUI1 family.

This is Protein translation factor SUI1 homolog from Cenarchaeum symbiosum (strain A).